A 199-amino-acid chain; its full sequence is Probable GTP-binding protein EngB (199 aa).

The 174-residue stretch at 24–197 (EGYEVIFAGR…GARLNTFFGY (174 aa)) folds into the EngB-type G domain. GTP is bound by residues 32 to 39 (GRSNAGKS), 59 to 63 (GKTQH), 77 to 80 (DLPG), 144 to 147 (TKSD), and 176 to 178 (FSS). The Mg(2+) site is built by Ser39 and Thr61.

The protein belongs to the TRAFAC class TrmE-Era-EngA-EngB-Septin-like GTPase superfamily. EngB GTPase family. Requires Mg(2+) as cofactor.

Necessary for normal cell division and for the maintenance of normal septation. This is Probable GTP-binding protein EngB from Ruthia magnifica subsp. Calyptogena magnifica.